The following is a 568-amino-acid chain: Arginine--tRNA ligase (568 aa).

Residues 129–139 carry the 'HIGH' region motif; the sequence is ANPTGPLHIGH.

The protein belongs to the class-I aminoacyl-tRNA synthetase family. Monomer.

It localises to the cytoplasm. The enzyme catalyses tRNA(Arg) + L-arginine + ATP = L-arginyl-tRNA(Arg) + AMP + diphosphate. The chain is Arginine--tRNA ligase from Wolbachia pipientis wMel.